The sequence spans 216 residues: Small ribosomal subunit protein uS3c (216 aa).

Residues 43 to 118 enclose the KH type-2 domain; the sequence is IKNYIQKNRR…KLNIAIVKVT (76 aa).

Belongs to the universal ribosomal protein uS3 family. In terms of assembly, part of the 30S ribosomal subunit.

It localises to the plastid. The protein localises to the chloroplast. The polypeptide is Small ribosomal subunit protein uS3c (rps3) (Phaseolus angularis (Azuki bean)).